The primary structure comprises 240 residues: Adenosylcobinamide-GDP ribazoletransferase (240 aa).

5 helical membrane passes run 31-51 (LLYY…ASHL), 62-81 (ALLL…DGLA), 109-129 (IAVV…WVLV), 133-153 (IGAQ…GLFL), and 179-199 (VLLV…LLAL).

The protein belongs to the CobS family. It depends on Mg(2+) as a cofactor.

It localises to the cell inner membrane. The catalysed reaction is alpha-ribazole + adenosylcob(III)inamide-GDP = adenosylcob(III)alamin + GMP + H(+). It carries out the reaction alpha-ribazole 5'-phosphate + adenosylcob(III)inamide-GDP = adenosylcob(III)alamin 5'-phosphate + GMP + H(+). It participates in cofactor biosynthesis; adenosylcobalamin biosynthesis; adenosylcobalamin from cob(II)yrinate a,c-diamide: step 7/7. Functionally, joins adenosylcobinamide-GDP and alpha-ribazole to generate adenosylcobalamin (Ado-cobalamin). Also synthesizes adenosylcobalamin 5'-phosphate from adenosylcobinamide-GDP and alpha-ribazole 5'-phosphate. The polypeptide is Adenosylcobinamide-GDP ribazoletransferase (Pseudomonas putida (strain ATCC 47054 / DSM 6125 / CFBP 8728 / NCIMB 11950 / KT2440)).